Reading from the N-terminus, the 56-residue chain is Prokaryotic ubiquitin-like protein UBact (56 aa).

A disordered region spans residues Met-1–Gln-56. The segment covering Lys-26–Lys-48 has biased composition (basic and acidic residues). A Deamidated glutamine modification is found at Gln-56. Residue Gln-56 forms an Isoglutamyl lysine isopeptide (Gln-Lys) (interchain with K-? in acceptor proteins) linkage.

The protein belongs to the ubiquitin-like protein UBact family. May be modified by deamidation of its C-terminal glutamine to glutamate by the adjacently encoded deamidase. This could be a prerequisite to the subsequent conjugation, as shown in the other prokaryotic ubiquitin-like protein Pup.

Functionally, may function as a protein modifier covalently attached to lysine residues of substrate proteins. This may serve to target the modified proteins for degradation by proteasomes. The polypeptide is Prokaryotic ubiquitin-like protein UBact (Pedosphaera parvula (strain Ellin514)).